A 47-amino-acid chain; its full sequence is Photosystem II reaction center protein K (47 aa).

Positions 1-10 are excised as a propeptide; that stretch reads MAAFSLDLLA. A helical membrane pass occupies residues 19–39; the sequence is FGPLIDILPIIPVFFLLLAFV.

It belongs to the PsbK family. PSII is composed of 1 copy each of membrane proteins PsbA, PsbB, PsbC, PsbD, PsbE, PsbF, PsbH, PsbI, PsbJ, PsbK, PsbL, PsbM, PsbT, PsbX, PsbY, PsbZ, Psb30/Ycf12, peripheral proteins PsbO, CyanoQ (PsbQ), PsbU, PsbV and a large number of cofactors. It forms dimeric complexes.

The protein localises to the cellular thylakoid membrane. One of the components of the core complex of photosystem II (PSII). PSII is a light-driven water:plastoquinone oxidoreductase that uses light energy to abstract electrons from H(2)O, generating O(2) and a proton gradient subsequently used for ATP formation. It consists of a core antenna complex that captures photons, and an electron transfer chain that converts photonic excitation into a charge separation. This is Photosystem II reaction center protein K from Synechococcus sp. (strain WH7803).